The following is a 267-amino-acid chain: MTNNTDKQTLKKLERQILRKTAQAINQYNMIEDGDKIMVCLSGGKDSYCLLEMLLLLQKKAPISFEIIAVNLDQKQPGFPEEVLPNYLKNKGVEFHIIERDTYSIVKRVIPEGKTTCGLCSRMRRGILYDFAEENNVTKVALGHHRDDIIETFFLNLFYNGSIKAMPAKLLSDDKRNIVIRPLAFVSEKETLEYSQLKEFPIIPCNLCGSQDNLQRVFIKDMLNRWEQNNPERKNVIFKALSNISPSQMLDKELFDFINISKDDIQR.

A PP-loop motif motif is present at residues Ser42–Ser47. [4Fe-4S] cluster is bound by residues Cys117, Cys120, and Cys208.

This sequence belongs to the TtcA family. Homodimer. Requires Mg(2+) as cofactor. [4Fe-4S] cluster serves as cofactor.

It is found in the cytoplasm. It carries out the reaction cytidine(32) in tRNA + S-sulfanyl-L-cysteinyl-[cysteine desulfurase] + AH2 + ATP = 2-thiocytidine(32) in tRNA + L-cysteinyl-[cysteine desulfurase] + A + AMP + diphosphate + H(+). The protein operates within tRNA modification. Its function is as follows. Catalyzes the ATP-dependent 2-thiolation of cytidine in position 32 of tRNA, to form 2-thiocytidine (s(2)C32). The sulfur atoms are provided by the cysteine/cysteine desulfurase (IscS) system. The chain is tRNA-cytidine(32) 2-sulfurtransferase 1 from Francisella tularensis subsp. tularensis (strain FSC 198).